The chain runs to 396 residues: Pectinesterase (396 aa).

An N-terminal signal peptide occupies residues 1–21 (MQSKTLYLKATALLGGCTVFA). Substrate is bound at residue Thr174. The Proton donor role is filled by Asp232. Asp259 acts as the Nucleophile in catalysis. The substrate site is built by Arg324 and Trp326.

It belongs to the pectinesterase family.

It localises to the secreted. It catalyses the reaction [(1-&gt;4)-alpha-D-galacturonosyl methyl ester](n) + n H2O = [(1-&gt;4)-alpha-D-galacturonosyl](n) + n methanol + n H(+). It functions in the pathway glycan metabolism; pectin degradation; 2-dehydro-3-deoxy-D-gluconate from pectin: step 1/5. Functionally, involved in maceration and soft-rotting of plant tissue. This is Pectinesterase (pme) from Ralstonia nicotianae (strain ATCC BAA-1114 / GMI1000) (Ralstonia solanacearum).